We begin with the raw amino-acid sequence, 316 residues long: MGNRHAKAKSHHGFDVDHDAKKLNKACKGMGTDEAAIIEILSSRTSDERQQIKQKYKATYGKDLEEVFKSDLSGNFEKTALALLDRPSEYDARQLQKAMKGLGTDEAVLIEILCTRTNKEIMAIKEAYQRLFDRSLESDVKADTSGNLKAILVSLLQANRDEGDDVDKDLAGQDAKDLYDAGDGRWGTDELAFNEVLAKRSHKQLRATFQAYQILIDKDIEEAIEAETSGDLQKAYLTLVRCARDQEGYFADRLYKSMKGTGTDEETLIHIIVTRAEVDLQGIKAKFQEKYQKSLSDMVRSDTSGDFQKLLVALLH.

The N-myristoyl glycine moiety is linked to residue G2. Annexin repeat units follow at residues 14–85 (FDVD…ALLD), 86–157 (RPSE…SLLQ), 169–241 (DLAG…TLVR), and 245–316 (DQEG…ALLH).

It belongs to the annexin family. As to quaternary structure, monomer and homodimer. In terms of tissue distribution, detected in intestine, and at much lower levels also in kidney (at protein level).

Its subcellular location is the apical cell membrane. It is found in the cell membrane. The protein resides in the cytoplasmic vesicle. Binds to membranes enriched in phosphatidylserine or phosphatidylglycerol in a calcium-dependent manner. Half-maximal membrane binding requires about 60 uM calcium. Does not bind to membranes that lack phospholipids with an acidic headgroup. In terms of biological role, binds to membranes enriched in phosphatidylserine or phosphatidylglycerol in a calcium-dependent manner, but requires higher calcium levels for membrane binding than isoform A. Half-maximal membrane binding requires about 320 uM calcium. May play a role in vesicular traffic to the apical plasma membrane. The polypeptide is Annexin A13 (ANXA13) (Canis lupus familiaris (Dog)).